The sequence spans 362 residues: Chorismate synthase (362 aa).

Positions 48 and 54 each coordinate NADP(+). FMN contacts are provided by residues 125 to 127 (RSS), 237 to 238 (NA), Gly277, 292 to 296 (KPTSS), and Arg318.

The protein belongs to the chorismate synthase family. In terms of assembly, homotetramer. It depends on FMNH2 as a cofactor.

It catalyses the reaction 5-O-(1-carboxyvinyl)-3-phosphoshikimate = chorismate + phosphate. It participates in metabolic intermediate biosynthesis; chorismate biosynthesis; chorismate from D-erythrose 4-phosphate and phosphoenolpyruvate: step 7/7. Its function is as follows. Catalyzes the anti-1,4-elimination of the C-3 phosphate and the C-6 proR hydrogen from 5-enolpyruvylshikimate-3-phosphate (EPSP) to yield chorismate, which is the branch point compound that serves as the starting substrate for the three terminal pathways of aromatic amino acid biosynthesis. This reaction introduces a second double bond into the aromatic ring system. The chain is Chorismate synthase from Idiomarina loihiensis (strain ATCC BAA-735 / DSM 15497 / L2-TR).